The chain runs to 264 residues: Major prion protein (264 aa).

A signal peptide spans 1-24 (MVKSHIGSWILVLFVAMWSDVGLC). The interaction with GRB2, ERI3 and SYN1 stretch occupies residues 25-241 (KKRPKPGGGW…ESQAYYQRGA (217 aa)). Positions 28–118 (PKPGGGWNTG…QWNKPSKPKT (91 aa)) are disordered. 6 repeat units span residues 54 to 62 (PQGGGSWGQ), 63 to 70 (PHGGGWGQ), 71 to 78 (PHGGSWGQ), 79 to 86 (PHGGGWGQ), 87 to 94 (PHGGGWGQ), and 95 to 103 (PHGGGGWGQ). Residues 54-103 (PQGGGSWGQPHGGGWGQPHGGSWGQPHGGGWGQPHGGGWGQPHGGGGWGQ) form a 6 X 8 AA tandem repeats of P-H-G-G-G-W-G-Q region. Residues 55–107 (QGGGSWGQPHGGGWGQPHGGSWGQPHGGGWGQPHGGGWGQPHGGGGWGQGGTH) are compositionally biased toward gly residues. The Cu(2+) site is built by His-72, Gly-73, Gly-74, His-80, Gly-81, Gly-82, His-88, Gly-89, Gly-90, His-96, Gly-98, and Gly-99. A disulfide bond links Cys-190 and Cys-225. 2 N-linked (GlcNAc...) asparagine glycosylation sites follow: Asn-192 and Asn-208. Ala-241 carries GPI-anchor amidated alanine lipidation. The propeptide at 242 to 264 (SVVLFSSPPVVLLISFLIFLIVG) is removed in mature form.

The protein belongs to the prion family. In terms of assembly, monomer and homodimer. Has a tendency to aggregate into amyloid fibrils containing a cross-beta spine, formed by a steric zipper of superposed beta-strands. Soluble oligomers may represent an intermediate stage on the path to fibril formation. Copper binding may promote oligomerization. Interacts with GRB2, APP, ERI3/PRNPIP and SYN1. Mislocalized cytosolically exposed PrP interacts with MGRN1; this interaction alters MGRN1 subcellular location and causes lysosomal enlargement. Interacts with KIAA1191.

It localises to the cell membrane. Its subcellular location is the golgi apparatus. Its primary physiological function is unclear. Has cytoprotective activity against internal or environmental stresses. May play a role in neuronal development and synaptic plasticity. May be required for neuronal myelin sheath maintenance. May play a role in iron uptake and iron homeostasis. Soluble oligomers are toxic to cultured neuroblastoma cells and induce apoptosis (in vitro). Association with GPC1 (via its heparan sulfate chains) targets PRNP to lipid rafts. Also provides Cu(2+) or Zn(2+) for the ascorbate-mediated GPC1 deaminase degradation of its heparan sulfate side chains. The polypeptide is Major prion protein (PRNP) (Boselaphus tragocamelus (Nilgai)).